Reading from the N-terminus, the 307-residue chain is Ornithine carbamoyltransferase (307 aa).

Carbamoyl phosphate-binding positions include 56–59 (STRT), Q83, R107, and 134–137 (HPCQ). L-ornithine is bound by residues N165, D223, and 227 to 228 (SM). Carbamoyl phosphate is bound by residues 263–264 (CL) and R291.

The protein belongs to the aspartate/ornithine carbamoyltransferase superfamily. OTCase family.

It is found in the cytoplasm. The enzyme catalyses carbamoyl phosphate + L-ornithine = L-citrulline + phosphate + H(+). It participates in amino-acid degradation; L-arginine degradation via ADI pathway; carbamoyl phosphate from L-arginine: step 2/2. Reversibly catalyzes the transfer of the carbamoyl group from carbamoyl phosphate (CP) to the N(epsilon) atom of ornithine (ORN) to produce L-citrulline. This chain is Ornithine carbamoyltransferase, found in Cupriavidus taiwanensis (strain DSM 17343 / BCRC 17206 / CCUG 44338 / CIP 107171 / LMG 19424 / R1) (Ralstonia taiwanensis (strain LMG 19424)).